The sequence spans 81 residues: Large ribosomal subunit protein bL31B (81 aa).

It belongs to the bacterial ribosomal protein bL31 family. Type B subfamily. In terms of assembly, part of the 50S ribosomal subunit.

This Limosilactobacillus fermentum (strain NBRC 3956 / LMG 18251) (Lactobacillus fermentum) protein is Large ribosomal subunit protein bL31B.